Here is a 415-residue protein sequence, read N- to C-terminus: Very late expression factor 1 (415 aa).

The Tyr recombinase domain occupies 171 to 357 (REIINTILDC…DESDDNDEDD (187 aa)). Residues Arg214, Lys242, Arg307, and His330 contribute to the active site. The tract at residues 339–415 (YLNKYDVGVD…GDDADLLSFN (77 aa)) is disordered. Tyr343 serves as the catalytic O-(3'-phospho-DNA)-tyrosine intermediate. Over residues 346-363 (GVDESDDNDEDDDDDEND) the composition is skewed to acidic residues. A compositionally biased stretch (low complexity) spans 375–404 (NISNYDINNSSSGNSSSNNTSGNDFNNNIS).

This sequence belongs to the 'phage' integrase family.

Its function is as follows. Involved in very late gene activation. The sequence is that of Very late expression factor 1 (VLF-1) from Heliothis zea nuclear polyhedrosis virus (HzSNPV).